The primary structure comprises 220 residues: Putative cobalt transport protein CbiM (220 aa).

Transmembrane regions (helical) follow at residues 6 to 26, 43 to 63, 74 to 94, 98 to 118, and 182 to 202; these read GFLP…IVVY, ALVA…FPSV, GLLV…IVLL, LLLA…MGII, and IFTL…AAVI.

The protein belongs to the CbiM family. As to quaternary structure, forms an energy-coupling factor (ECF) transporter complex composed of an ATP-binding protein (A component, CbiO), a transmembrane protein (T component, CbiQ) and 2 possible substrate-capture proteins (S components, CbiM and CbiN) of unknown stoichimetry.

It localises to the cell membrane. Its pathway is cofactor biosynthesis; adenosylcobalamin biosynthesis. In terms of biological role, part of the energy-coupling factor (ECF) transporter complex CbiMNOQ involved in cobalt import. The sequence is that of Putative cobalt transport protein CbiM from Haloquadratum walsbyi (strain DSM 16790 / HBSQ001).